The primary structure comprises 177 residues: Large ribosomal subunit protein uL6 (177 aa).

Belongs to the universal ribosomal protein uL6 family. In terms of assembly, part of the 50S ribosomal subunit.

This protein binds to the 23S rRNA, and is important in its secondary structure. It is located near the subunit interface in the base of the L7/L12 stalk, and near the tRNA binding site of the peptidyltransferase center. This chain is Large ribosomal subunit protein uL6, found in Rhodopseudomonas palustris (strain BisB18).